A 544-amino-acid chain; its full sequence is Chaperonin GroEL 2 (544 aa).

ATP contacts are provided by residues 30–33 (TLGP), K51, 87–91 (DGTTT), G415, and D496.

The protein belongs to the chaperonin (HSP60) family. Forms a cylinder of 14 subunits composed of two heptameric rings stacked back-to-back. Interacts with the co-chaperonin GroES.

The protein localises to the cytoplasm. It catalyses the reaction ATP + H2O + a folded polypeptide = ADP + phosphate + an unfolded polypeptide.. Together with its co-chaperonin GroES, plays an essential role in assisting protein folding. The GroEL-GroES system forms a nano-cage that allows encapsulation of the non-native substrate proteins and provides a physical environment optimized to promote and accelerate protein folding. The chain is Chaperonin GroEL 2 from Rhizobium johnstonii (strain DSM 114642 / LMG 32736 / 3841) (Rhizobium leguminosarum bv. viciae).